We begin with the raw amino-acid sequence, 301 residues long: MRVVFMGTPDFSVPVLEALVAAGHEIAAVYCQPPRPAGRGKKDRPTPVHARALDLGLEVRHPVSLKGAEAQADFAALGADVAVVVAYGLILPQAVLDAPRHGCLNIHASLLPRWRGAAPIHRAIMAGDEATGICIMQMEAGLDTGPVLLRSRTPIRAEETTGALHDRLSAMGADLIVEALARLPELTPEPQPEDGVTYAAKIDKAEARVDWTRPAVAIDRQIRGLSPFPGAWTEIAGERVKLLASRLDEGQGTPGEVLDDALTIACGTGAISLIRLQRAGKAAQDADIFLRGWPVPKGTRL.

109–112 (SLLP) is a (6S)-5,6,7,8-tetrahydrofolate binding site.

This sequence belongs to the Fmt family.

The catalysed reaction is L-methionyl-tRNA(fMet) + (6R)-10-formyltetrahydrofolate = N-formyl-L-methionyl-tRNA(fMet) + (6S)-5,6,7,8-tetrahydrofolate + H(+). Attaches a formyl group to the free amino group of methionyl-tRNA(fMet). The formyl group appears to play a dual role in the initiator identity of N-formylmethionyl-tRNA by promoting its recognition by IF2 and preventing the misappropriation of this tRNA by the elongation apparatus. In Ruegeria pomeroyi (strain ATCC 700808 / DSM 15171 / DSS-3) (Silicibacter pomeroyi), this protein is Methionyl-tRNA formyltransferase.